The chain runs to 730 residues: Wall-associated receptor kinase-like 3 (730 aa).

The N-terminal stretch at 1–25 (MKTKTYNFRYIVASVLTLLMNGSSA) is a signal peptide. At 26-357 (ATPPNSNSSS…AKLAHVLRGV (332 aa)) the chain is on the extracellular side. N-linked (GlcNAc...) asparagine glycans are attached at residues asparagine 32, asparagine 38, asparagine 68, asparagine 90, asparagine 119, asparagine 132, asparagine 212, asparagine 233, and asparagine 269. Positions 283-340 (CLCRYGYFSRMSYRSCYCGSGYRGNPYIRGGCIDIDECEVPNKCGEDTCVNMAGRYSC) are atypical EGF-like. Disulfide bonds link cysteine 285–cysteine 298, cysteine 320–cysteine 331, and cysteine 326–cysteine 340. Residues 358-378 (LIGLLGLLFFVIGIFGLYKFI) form a helical membrane-spanning segment. Over 379 to 730 (RKRRRIIRSM…LMEINRIYDS (352 aa)) the chain is Cytoplasmic. The Protein kinase domain occupies 428–699 (FSIDRVLGQG…REVSIKLERI (272 aa)). Residues 434 to 442 (LGQGGQGTV) and lysine 456 each bind ATP. The Proton acceptor role is filled by aspartate 553. The segment at 703–730 (PKDLDVHTENEEEEEEDQLMEINRIYDS) is disordered. The span at 712 to 721 (NEEEEEEDQL) shows a compositional bias: acidic residues.

It belongs to the protein kinase superfamily. Ser/Thr protein kinase family. As to expression, preferentially expressed in roots and flowers.

The protein localises to the membrane. It carries out the reaction L-seryl-[protein] + ATP = O-phospho-L-seryl-[protein] + ADP + H(+). It catalyses the reaction L-threonyl-[protein] + ATP = O-phospho-L-threonyl-[protein] + ADP + H(+). In terms of biological role, serine/threonine-protein kinase that may function as a signaling receptor of extracellular matrix component. The polypeptide is Wall-associated receptor kinase-like 3 (WAKL3) (Arabidopsis thaliana (Mouse-ear cress)).